The chain runs to 322 residues: MSPNFKLQCHFILILLTALRGESRYLEVQEAAVYDPLLLFSANLKRDLAEEQPYRRALRCLDMLSLPGQFTFTADRPQLHCAAFFIGEPEEFITIHYDLVSIDCQGGDFLKVFDGWILKGEKFPSSQDHPLPTMKRYTDFCESGLTRRSIRSSQNVAMVFFRVHEPGNGFTITIKTDPNLFPCNVISQTPSGRFTLVVPYQHQNCSFSIIYPVAIKISDLTLGHLHGLQLKKPAAGCGGTGDFVELLGGTGLDPSKMMPLADLCYPFLGPAQMKISCDNAVVRMVSSGKHINRVTFEYRQLEPFELETSTGNSIPEYCLSSL.

The first 24 residues, 1-24, serve as a signal peptide directing secretion; the sequence is MSPNFKLQCHFILILLTALRGESR. Cystine bridges form between cysteine 60–cysteine 81, cysteine 104–cysteine 141, cysteine 183–cysteine 205, cysteine 237–cysteine 264, and cysteine 277–cysteine 318. N-linked (GlcNAc...) asparagine glycosylation is present at asparagine 204.

It belongs to the CRF-binding protein family.

The protein localises to the secreted. Binds CRF and inactivates it. May prevent inappropriate pituitary-adrenal stimulation in pregnancy. This is Corticotropin-releasing factor-binding protein (Crhbp) from Mus musculus (Mouse).